Reading from the N-terminus, the 334-residue chain is Probable fructose-bisphosphate aldolase class 1 (334 aa).

The protein belongs to the class I fructose-bisphosphate aldolase family.

The enzyme catalyses beta-D-fructose 1,6-bisphosphate = D-glyceraldehyde 3-phosphate + dihydroxyacetone phosphate. It participates in carbohydrate degradation; glycolysis; D-glyceraldehyde 3-phosphate and glycerone phosphate from D-glucose: step 4/4. In Xanthomonas axonopodis pv. citri (strain 306), this protein is Probable fructose-bisphosphate aldolase class 1.